Reading from the N-terminus, the 256-residue chain is Imidazole glycerol phosphate synthase subunit HisF (256 aa).

Residues aspartate 12 and aspartate 131 contribute to the active site.

It belongs to the HisA/HisF family. Heterodimer of HisH and HisF.

It localises to the cytoplasm. The catalysed reaction is 5-[(5-phospho-1-deoxy-D-ribulos-1-ylimino)methylamino]-1-(5-phospho-beta-D-ribosyl)imidazole-4-carboxamide + L-glutamine = D-erythro-1-(imidazol-4-yl)glycerol 3-phosphate + 5-amino-1-(5-phospho-beta-D-ribosyl)imidazole-4-carboxamide + L-glutamate + H(+). Its pathway is amino-acid biosynthesis; L-histidine biosynthesis; L-histidine from 5-phospho-alpha-D-ribose 1-diphosphate: step 5/9. Its function is as follows. IGPS catalyzes the conversion of PRFAR and glutamine to IGP, AICAR and glutamate. The HisF subunit catalyzes the cyclization activity that produces IGP and AICAR from PRFAR using the ammonia provided by the HisH subunit. The polypeptide is Imidazole glycerol phosphate synthase subunit HisF (Beutenbergia cavernae (strain ATCC BAA-8 / DSM 12333 / CCUG 43141 / JCM 11478 / NBRC 16432 / NCIMB 13614 / HKI 0122)).